Here is a 711-residue protein sequence, read N- to C-terminus: Polyribonucleotide nucleotidyltransferase (711 aa).

Mg(2+) contacts are provided by D494 and D500. Residues P560–I620 enclose the KH domain. Residues G651–C710 form the S1 motif domain.

The protein belongs to the polyribonucleotide nucleotidyltransferase family. Requires Mg(2+) as cofactor.

The protein localises to the cytoplasm. The catalysed reaction is RNA(n+1) + phosphate = RNA(n) + a ribonucleoside 5'-diphosphate. In terms of biological role, involved in mRNA degradation. Catalyzes the phosphorolysis of single-stranded polyribonucleotides processively in the 3'- to 5'-direction. The protein is Polyribonucleotide nucleotidyltransferase of Campylobacter hominis (strain ATCC BAA-381 / DSM 21671 / CCUG 45161 / LMG 19568 / NCTC 13146 / CH001A).